The sequence spans 591 residues: V-type ATP synthase alpha chain (591 aa).

231–238 (GPFGSGKT) lines the ATP pocket.

The protein belongs to the ATPase alpha/beta chains family.

The catalysed reaction is ATP + H2O + 4 H(+)(in) = ADP + phosphate + 5 H(+)(out). Its function is as follows. Produces ATP from ADP in the presence of a proton gradient across the membrane. The V-type alpha chain is a catalytic subunit. In Clostridium novyi (strain NT), this protein is V-type ATP synthase alpha chain.